We begin with the raw amino-acid sequence, 380 residues long: uncharacterized protein (380 aa).

Belongs to the metallo-dependent hydrolases superfamily.

This is an uncharacterized protein from Methanocaldococcus jannaschii (strain ATCC 43067 / DSM 2661 / JAL-1 / JCM 10045 / NBRC 100440) (Methanococcus jannaschii).